Here is a 310-residue protein sequence, read N- to C-terminus: Ribosomal RNA small subunit methyltransferase H (310 aa).

Residues 32 to 34, D52, A83, D100, and Q107 contribute to the S-adenosyl-L-methionine site; that span reads GGH.

Belongs to the methyltransferase superfamily. RsmH family.

Its subcellular location is the cytoplasm. It catalyses the reaction cytidine(1402) in 16S rRNA + S-adenosyl-L-methionine = N(4)-methylcytidine(1402) in 16S rRNA + S-adenosyl-L-homocysteine + H(+). In terms of biological role, specifically methylates the N4 position of cytidine in position 1402 (C1402) of 16S rRNA. This is Ribosomal RNA small subunit methyltransferase H from Geobacillus sp. (strain WCH70).